A 248-amino-acid polypeptide reads, in one-letter code: Ureidoacrylate amidohydrolase RutB (248 aa).

The active-site Proton acceptor is Asp41. Lys150 is an active-site residue. The active-site Nucleophile is Cys183.

Belongs to the isochorismatase family. RutB subfamily.

It catalyses the reaction (Z)-3-ureidoacrylate + H2O + H(+) = (Z)-3-aminoacrylate + NH4(+) + CO2. The catalysed reaction is (Z)-3-ureidoacrylate + H2O = (Z)-3-aminoacrylate + carbamate + H(+). The enzyme catalyses (Z)-2-methylureidoacrylate + H2O + H(+) = (Z)-2-methylaminoacrylate + NH4(+) + CO2. Its function is as follows. Hydrolyzes ureidoacrylate to form aminoacrylate and carbamate. The carbamate hydrolyzes spontaneously, thereby releasing one of the nitrogen atoms of the pyrimidine ring as ammonia and one of its carbon atoms as CO2. The polypeptide is Ureidoacrylate amidohydrolase RutB (Methylorubrum extorquens (strain DSM 6343 / CIP 106787 / DM4) (Methylobacterium extorquens)).